Consider the following 339-residue polypeptide: Phosphatidylglycerol--prolipoprotein diacylglyceryl transferase (339 aa).

Transmembrane regions (helical) follow at residues 43 to 63 (FTIAWYGVLMMLGIAAGYWLG), 81 to 101 (ILWMLFWGFVGARLVFVLTSW), and 121 to 141 (NGGISIHGGLIGGVLTLIYFA). R167 is an a 1,2-diacyl-sn-glycero-3-phospho-(1'-sn-glycerol) binding site. Helical transmembrane passes span 231 to 251 (FTQLYGVIIGIILAVASYFWL) and 300 to 320 (LWTDTQIFSVPLILVSLWMLW).

The protein belongs to the Lgt family.

It localises to the cell membrane. It carries out the reaction L-cysteinyl-[prolipoprotein] + a 1,2-diacyl-sn-glycero-3-phospho-(1'-sn-glycerol) = an S-1,2-diacyl-sn-glyceryl-L-cysteinyl-[prolipoprotein] + sn-glycerol 1-phosphate + H(+). The protein operates within protein modification; lipoprotein biosynthesis (diacylglyceryl transfer). In terms of biological role, catalyzes the transfer of the diacylglyceryl group from phosphatidylglycerol to the sulfhydryl group of the N-terminal cysteine of a prolipoprotein, the first step in the formation of mature lipoproteins. This Deinococcus radiodurans (strain ATCC 13939 / DSM 20539 / JCM 16871 / CCUG 27074 / LMG 4051 / NBRC 15346 / NCIMB 9279 / VKM B-1422 / R1) protein is Phosphatidylglycerol--prolipoprotein diacylglyceryl transferase.